The primary structure comprises 122 residues: Small ribosomal subunit protein uS13 (122 aa).

The disordered stretch occupies residues 97–122 (PVRGQKTKSNARTRKGPRPSRIKKKK). Residues 101 to 122 (QKTKSNARTRKGPRPSRIKKKK) are compositionally biased toward basic residues.

The protein belongs to the universal ribosomal protein uS13 family. As to quaternary structure, part of the 30S ribosomal subunit. Forms a loose heterodimer with protein S19. Forms two bridges to the 50S subunit in the 70S ribosome.

Its function is as follows. Located at the top of the head of the 30S subunit, it contacts several helices of the 16S rRNA. In the 70S ribosome it contacts the 23S rRNA (bridge B1a) and protein L5 of the 50S subunit (bridge B1b), connecting the 2 subunits; these bridges are implicated in subunit movement. Contacts the tRNAs in the A and P-sites. This chain is Small ribosomal subunit protein uS13, found in Thermosipho melanesiensis (strain DSM 12029 / CIP 104789 / BI429).